Here is a 485-residue protein sequence, read N- to C-terminus: Glutamyl-tRNA(Gln) amidotransferase subunit A (485 aa).

Active-site charge relay system residues include lysine 79 and serine 154. The Acyl-ester intermediate role is filled by serine 178.

Belongs to the amidase family. GatA subfamily. In terms of assembly, heterotrimer of A, B and C subunits.

It carries out the reaction L-glutamyl-tRNA(Gln) + L-glutamine + ATP + H2O = L-glutaminyl-tRNA(Gln) + L-glutamate + ADP + phosphate + H(+). In terms of biological role, allows the formation of correctly charged Gln-tRNA(Gln) through the transamidation of misacylated Glu-tRNA(Gln) in organisms which lack glutaminyl-tRNA synthetase. The reaction takes place in the presence of glutamine and ATP through an activated gamma-phospho-Glu-tRNA(Gln). The protein is Glutamyl-tRNA(Gln) amidotransferase subunit A of Bacillus licheniformis (strain ATCC 14580 / DSM 13 / JCM 2505 / CCUG 7422 / NBRC 12200 / NCIMB 9375 / NCTC 10341 / NRRL NRS-1264 / Gibson 46).